The chain runs to 443 residues: Zinc finger protein ZIC 1 (443 aa).

Residues 221–256 (LICKWIEPEQLANPKKSCNKTFSTMHELVTHVTVEH) form a C2H2-type 1; atypical zinc finger. A C2H2-type 2; atypical zinc finger spans residues 265-292 (HICVWEECPREGKPFKAKYKLINHIRVH). 3 consecutive C2H2-type zinc fingers follow at residues 298–322 (FPCPFPGCGKVFARSENLKIHKRTH), 328–352 (FKCEFEGCDRRFANSSDRKKHMHVH), and 358–380 (YLCKMCDKSYTHPSSLRKHMKVH). Residues 371–433 (SSLRKHMKVH…AVHHTSNHST (63 aa)) form a disordered region. Over residues 383–396 (SSQGSQPSPAASSG) the composition is skewed to low complexity. Over residues 397 to 413 (YESSTPPTIVSPSAENQ) the composition is skewed to polar residues. The interval 408-443 (PSAENQSTSSLSPSSSAVHHTSNHSTLSSNFNEWYV) is negatively regulates transcriptional activity. Over residues 414 to 433 (STSSLSPSSSAVHHTSNHST) the composition is skewed to low complexity.

The protein belongs to the GLI C2H2-type zinc-finger protein family. During early gastrula stages, widely expressed in the dorsal ectoderm. At mid-gastrula, expressed throughout the presumptive neural plate and at late gastrula, expression gradually diminishes in the dorsal midline and increases in the anterior folds. By early neurula stage, expression becomes restricted to the lateral edges of the neural plate, corresponding to the presumptive dorsal neural plate and neural crest, and in flanking ectoderm. In early tailbud stages (stages 22-23), expressed in the dorsal forebrain, midbrain and hindbrain. Subsequently expressed in the telencephalon and at the diencephalon/mesencephalon boundary. In the spinal cord, expression is restricted to the dorsal most region including the roof plate. Also expressed in the somites but not in eye vesicles. At larval stages, expressed mainly in the dorsal neural tube throughout its anteroposterior axis.

It is found in the nucleus. Its subcellular location is the cytoplasm. Functionally, transcriptional activator that induces expression of multiple genes including pax3, en2, snai2/slug, feb and a subset of wnt genes. Has multiple key roles in the regulation of neural induction and neurogenesis: acts as a neural competence factor, sensitizing the presumptive neuroectoderm to respond to subsequent neuralizing signals. Promotes both preplacodal cell fates and neural crest cell fates, two of the cell populations that arise from the neural plate border. Cooperates with pax3 in concert with wnt signaling to determine neural crest fate. Synergizes with the bmp-inhibitor noggin/nog and acts through the wnt pathway to induce expression of en2. May bind to the minimal GLI-consensus sequence 5'-TGGGTGGTC-3'. The protein is Zinc finger protein ZIC 1 (zic1) of Xenopus laevis (African clawed frog).